Here is a 565-residue protein sequence, read N- to C-terminus: Formate--tetrahydrofolate ligase (565 aa).

67–74 lines the ATP pocket; that stretch reads TPLGEGKT.

It belongs to the formate--tetrahydrofolate ligase family.

It catalyses the reaction (6S)-5,6,7,8-tetrahydrofolate + formate + ATP = (6R)-10-formyltetrahydrofolate + ADP + phosphate. It functions in the pathway one-carbon metabolism; tetrahydrofolate interconversion. The sequence is that of Formate--tetrahydrofolate ligase from Saccharopolyspora erythraea (strain ATCC 11635 / DSM 40517 / JCM 4748 / NBRC 13426 / NCIMB 8594 / NRRL 2338).